A 77-amino-acid chain; its full sequence is Conotoxin Ar5.1 a (77 aa).

An N-terminal signal peptide occupies residues methionine 1–serine 19. The propeptide occupies asparagine 20–lysine 44.

Belongs to the conotoxin T superfamily. Contains 2 disulfide bonds that can be either 'C1-C3, C2-C4' or 'C1-C4, C2-C3', since these disulfide connectivities have been observed for conotoxins with cysteine framework V (for examples, see AC P0DQQ7 and AC P81755). As to expression, expressed by the venom duct.

The protein resides in the secreted. The chain is Conotoxin Ar5.1 a from Conus arenatus (Sand-dusted cone).